We begin with the raw amino-acid sequence, 102 residues long: NADH-quinone oxidoreductase subunit K (102 aa).

A run of 3 helical transmembrane segments spans residues 5–25 (LSHFLIVAAMLFTIGVAGIIL), 30–50 (IIVVLMSVELILLSVNINLVS), and 62–82 (VFSLFVLTVAAAEAAIGLAIL).

This sequence belongs to the complex I subunit 4L family. In terms of assembly, NDH-1 is composed of 14 different subunits. Subunits NuoA, H, J, K, L, M, N constitute the membrane sector of the complex.

It is found in the cell inner membrane. It catalyses the reaction a quinone + NADH + 5 H(+)(in) = a quinol + NAD(+) + 4 H(+)(out). Functionally, NDH-1 shuttles electrons from NADH, via FMN and iron-sulfur (Fe-S) centers, to quinones in the respiratory chain. The immediate electron acceptor for the enzyme in this species is believed to be ubiquinone. Couples the redox reaction to proton translocation (for every two electrons transferred, four hydrogen ions are translocated across the cytoplasmic membrane), and thus conserves the redox energy in a proton gradient. This Methylocella silvestris (strain DSM 15510 / CIP 108128 / LMG 27833 / NCIMB 13906 / BL2) protein is NADH-quinone oxidoreductase subunit K.